Reading from the N-terminus, the 339-residue chain is Dihydroorotate dehydrogenase (quinone) (339 aa).

FMN contacts are provided by residues 62-66 and threonine 86; that span reads AGMDK. Residue lysine 66 coordinates substrate. Substrate is bound at residue 111–115; sequence NRMGF. The FMN site is built by asparagine 139 and asparagine 172. Asparagine 172 contacts substrate. Serine 175 (nucleophile) is an active-site residue. Residue asparagine 177 participates in substrate binding. Positions 217 and 245 each coordinate FMN. 246 to 247 contributes to the substrate binding site; it reads NT. Residues glycine 268, glycine 297, and 318–319 each bind FMN; that span reads YS.

It belongs to the dihydroorotate dehydrogenase family. Type 2 subfamily. As to quaternary structure, monomer. The cofactor is FMN.

It is found in the cell membrane. It catalyses the reaction (S)-dihydroorotate + a quinone = orotate + a quinol. The protein operates within pyrimidine metabolism; UMP biosynthesis via de novo pathway; orotate from (S)-dihydroorotate (quinone route): step 1/1. Functionally, catalyzes the conversion of dihydroorotate to orotate with quinone as electron acceptor. The protein is Dihydroorotate dehydrogenase (quinone) of Shewanella pealeana (strain ATCC 700345 / ANG-SQ1).